We begin with the raw amino-acid sequence, 174 residues long: Ribosome maturation factor RimP (174 aa).

This sequence belongs to the RimP family.

It localises to the cytoplasm. Functionally, required for maturation of 30S ribosomal subunits. In Acinetobacter baumannii (strain SDF), this protein is Ribosome maturation factor RimP.